The sequence spans 432 residues: Gamma-glutamyl phosphate reductase (432 aa).

It belongs to the gamma-glutamyl phosphate reductase family.

It is found in the cytoplasm. It catalyses the reaction L-glutamate 5-semialdehyde + phosphate + NADP(+) = L-glutamyl 5-phosphate + NADPH + H(+). Its pathway is amino-acid biosynthesis; L-proline biosynthesis; L-glutamate 5-semialdehyde from L-glutamate: step 2/2. In terms of biological role, catalyzes the NADPH-dependent reduction of L-glutamate 5-phosphate into L-glutamate 5-semialdehyde and phosphate. The product spontaneously undergoes cyclization to form 1-pyrroline-5-carboxylate. This is Gamma-glutamyl phosphate reductase from Ruminiclostridium cellulolyticum (strain ATCC 35319 / DSM 5812 / JCM 6584 / H10) (Clostridium cellulolyticum).